The chain runs to 399 residues: S-adenosylmethionine synthase (399 aa).

Histidine 17 provides a ligand contact to ATP. Residue aspartate 19 participates in Mg(2+) binding. Position 45 (glutamate 45) interacts with K(+). Glutamate 58 and glutamine 101 together coordinate L-methionine. Residues 101–111 (QSADIAMGVDQ) form a flexible loop region. Residues 177 to 179 (DGK), 244 to 245 (RF), aspartate 253, 259 to 260 (RK), alanine 276, and lysine 280 each bind ATP. Aspartate 253 is a binding site for L-methionine. Residue lysine 284 coordinates L-methionine.

Belongs to the AdoMet synthase family. In terms of assembly, homotetramer; dimer of dimers. The cofactor is Mg(2+). K(+) is required as a cofactor.

The protein resides in the cytoplasm. The enzyme catalyses L-methionine + ATP + H2O = S-adenosyl-L-methionine + phosphate + diphosphate. It participates in amino-acid biosynthesis; S-adenosyl-L-methionine biosynthesis; S-adenosyl-L-methionine from L-methionine: step 1/1. Catalyzes the formation of S-adenosylmethionine (AdoMet) from methionine and ATP. The overall synthetic reaction is composed of two sequential steps, AdoMet formation and the subsequent tripolyphosphate hydrolysis which occurs prior to release of AdoMet from the enzyme. The sequence is that of S-adenosylmethionine synthase from Bacillus anthracis (strain A0248).